The chain runs to 82 residues: Putative membrane protein insertion efficiency factor (82 aa).

Positions 63 to 82 are disordered; that stretch reads PGGHDPVPESTILSKEKSVK.

It belongs to the UPF0161 family.

It localises to the cell inner membrane. Could be involved in insertion of integral membrane proteins into the membrane. The sequence is that of Putative membrane protein insertion efficiency factor from Protochlamydia amoebophila (strain UWE25).